A 915-amino-acid polypeptide reads, in one-letter code: Alanine--tRNA ligase (915 aa).

Zn(2+) is bound by residues His605, His609, Cys709, and His713. The disordered stretch occupies residues 882-901; sequence GGGGDERLAQGGGRNPDGLT.

The protein belongs to the class-II aminoacyl-tRNA synthetase family. It depends on Zn(2+) as a cofactor.

The protein resides in the cytoplasm. The catalysed reaction is tRNA(Ala) + L-alanine + ATP = L-alanyl-tRNA(Ala) + AMP + diphosphate. Its function is as follows. Catalyzes the attachment of alanine to tRNA(Ala) in a two-step reaction: alanine is first activated by ATP to form Ala-AMP and then transferred to the acceptor end of tRNA(Ala). Also edits incorrectly charged Ser-tRNA(Ala) and Gly-tRNA(Ala) via its editing domain. This chain is Alanine--tRNA ligase, found in Methanopyrus kandleri (strain AV19 / DSM 6324 / JCM 9639 / NBRC 100938).